The chain runs to 808 residues: DNA gyrase subunit B (808 aa).

The region spanning 429–544 is the Toprim domain; sequence SELFIVEGDS…KGYLYIAQPP (116 aa). Residues E435, D509, and D511 each coordinate Mg(2+).

This sequence belongs to the type II topoisomerase GyrB family. Heterotetramer, composed of two GyrA and two GyrB chains. In the heterotetramer, GyrA contains the active site tyrosine that forms a transient covalent intermediate with DNA, while GyrB binds cofactors and catalyzes ATP hydrolysis. Mg(2+) serves as cofactor. Mn(2+) is required as a cofactor. The cofactor is Ca(2+).

Its subcellular location is the cytoplasm. It carries out the reaction ATP-dependent breakage, passage and rejoining of double-stranded DNA.. A type II topoisomerase that negatively supercoils closed circular double-stranded (ds) DNA in an ATP-dependent manner to modulate DNA topology and maintain chromosomes in an underwound state. Negative supercoiling favors strand separation, and DNA replication, transcription, recombination and repair, all of which involve strand separation. Also able to catalyze the interconversion of other topological isomers of dsDNA rings, including catenanes and knotted rings. Type II topoisomerases break and join 2 DNA strands simultaneously in an ATP-dependent manner. The protein is DNA gyrase subunit B of Rickettsia bellii (strain RML369-C).